The following is a 168-amino-acid chain: Ribosome maturation factor RimM (168 aa).

A PRC barrel domain is found at 96-168 (VDEYYWGDLI…TIRVDWQKDW (73 aa)).

This sequence belongs to the RimM family. Binds ribosomal protein uS19.

The protein resides in the cytoplasm. Functionally, an accessory protein needed during the final step in the assembly of 30S ribosomal subunit, possibly for assembly of the head region. Essential for efficient processing of 16S rRNA. May be needed both before and after RbfA during the maturation of 16S rRNA. It has affinity for free ribosomal 30S subunits but not for 70S ribosomes. This Aromatoleum aromaticum (strain DSM 19018 / LMG 30748 / EbN1) (Azoarcus sp. (strain EbN1)) protein is Ribosome maturation factor RimM.